We begin with the raw amino-acid sequence, 304 residues long: Myelin basic protein (304 aa).

Composition is skewed to basic and acidic residues over residues 1–12 (MGNHAGKRELNA) and 22–32 (NRGESEKKRNL). The tract at residues 1 to 146 (MGNHAGKREL…QKRPSQRHGS (146 aa)) is disordered. An N-acetylalanine modification is found at Gly2. Residues 51–65 (ANQNNGTSSQDTAVT) show a composition bias toward polar residues. Residues 95 to 113 (FSRDAPGREDNTFKDRPSE) are compositionally biased toward basic and acidic residues. At Ser96 the chain carries Phosphoserine. The span at 117–130 (LQTIQEDSAATSES) shows a compositional bias: polar residues. 2 positions are modified to phosphoserine: Ser141 and Ser146. Tyr148 carries the post-translational modification Phosphotyrosine. Phosphothreonine is present on Thr151. Residue Ser153 is modified to Phosphoserine. Thr154 bears the Phosphothreonine mark. A citrulline; in form C8 mark is found at Arg159 and Arg165. At Arg167 the chain carries Citrulline. Position 169 is a phosphothreonine (Thr169). The residue at position 174 (Ser174) is a Phosphoserine. Omega-N-methylarginine occurs at positions 177 and 183. The interval 179–222 (FGGDRGAPKRGSGKDSHHPARTAHYGSLPQKSHGRTQDENPVVH) is induces experimental autoimmune encephalomyelitis (EAE) 1. The disordered stretch occupies residues 180–249 (GGDRGAPKRG…GRGLSLSRFS (70 aa)). Ser190 is subject to Phosphoserine. Residue Arg199 is modified to Citrulline. Tyr203 is modified (phosphotyrosine). At Ser210 the chain carries Phosphoserine. Phosphothreonine occurs at positions 214 and 229. Arg231 is subject to Citrulline. Thr232 carries the phosphothreonine modification. Residue Gln237 is modified to Deamidated glutamine. The residue at position 241 (Arg241) is an Omega-N-methylarginine; alternate. Arg241 carries the symmetric dimethylarginine; alternate modification. Residues 246-256 (SRFSWGAEGQR) form an induces experimental autoimmune encephalomyelitis (EAE) 2 region. The residue at position 249 (Ser249) is a Phosphoserine. Residues Arg256 and Arg264 each carry the citrulline; in form C8 modification. Deamidated glutamine is present on Gln281. A Citrulline; in form C8 modification is found at Arg293. Ser295 bears the Phosphoserine mark. Citrulline is present on Arg296. Phosphoserine; by UHMK1 is present on Ser299. Arg303 bears the Citrulline mark. Position 304 is a citrulline; in form C8 (Arg304).

It belongs to the myelin basic protein family. Homodimer. Isoform 3 exists as a homodimer. Several charge isomers of MBP; C1 (the most cationic, least modified, and most abundant form), C2, C3, C4, C5, C6, C7, C8-A and C8-B (the least cationic form); are produced as a result of optional PTM, such as phosphorylation, deamidation of glutamine or asparagine, arginine citrullination and methylation. C8-A and C8-B contain each two mass isoforms termed C8-A(H), C8-A(L), C8-B(H) and C8-B(L), (H) standing for higher and (L) for lower molecular weight. C3, C4 and C5 are phosphorylated. The ratio of methylated arginine residues decreases during aging, making the protein more cationic. Post-translationally, the N-terminal alanine is acetylated (isoform 3, isoform 4, isoform 5 and isoform 6). In terms of processing, arg-241 was found to be 6% monomethylated and 60% symmetrically dimethylated. Proteolytically cleaved in B cell lysosomes by cathepsin CTSG which degrades the major immunogenic MBP epitope and prevents the activation of MBP-specific autoreactive T cells. Post-translationally, phosphorylated by TAOK2, VRK2, MAPK11, MAPK12, MAPK14 and MINK1. In terms of tissue distribution, MBP isoforms are found in both the central and the peripheral nervous system, whereas Golli-MBP isoforms are expressed in fetal thymus, spleen and spinal cord, as well as in cell lines derived from the immune system.

The protein resides in the myelin membrane. It is found in the nucleus. In terms of biological role, the classic group of MBP isoforms (isoform 4-isoform 14) are with PLP the most abundant protein components of the myelin membrane in the CNS. They have a role in both its formation and stabilization. The smaller isoforms might have an important role in remyelination of denuded axons in multiple sclerosis. The non-classic group of MBP isoforms (isoform 1-isoform 3/Golli-MBPs) may preferentially have a role in the early developing brain long before myelination, maybe as components of transcriptional complexes, and may also be involved in signaling pathways in T-cells and neural cells. Differential splicing events combined with optional post-translational modifications give a wide spectrum of isomers, with each of them potentially having a specialized function. Induces T-cell proliferation. The sequence is that of Myelin basic protein (MBP) from Homo sapiens (Human).